We begin with the raw amino-acid sequence, 494 residues long: Alpha-amylase-related protein (494 aa).

The signal sequence occupies residues 1–20; the sequence is MFKFALALTLCLAGASLSLA. The residue at position 21 (Gln-21) is a Pyrrolidone carboxylic acid. Residues Cys-48 and Cys-104 are joined by a disulfide bond. Residues Asn-118, Gln-169, and Asp-178 each contribute to the Ca(2+) site. Cys-157 and Cys-171 are disulfide-bonded. Arg-206 provides a ligand contact to chloride. The active-site Nucleophile is the Asp-208. His-212 lines the Ca(2+) pocket. Glu-245 serves as the catalytic Proton donor. Positions 308 and 343 each coordinate chloride. Intrachain disulfides connect Cys-376–Cys-382, Cys-418–Cys-441, and Cys-448–Cys-460.

The protein belongs to the glycosyl hydrolase 13 family. In terms of assembly, monomer. It depends on Ca(2+) as a cofactor. The cofactor is chloride.

The protein resides in the secreted. The enzyme catalyses Endohydrolysis of (1-&gt;4)-alpha-D-glucosidic linkages in polysaccharides containing three or more (1-&gt;4)-alpha-linked D-glucose units.. This Drosophila punjabiensis (Fruit fly) protein is Alpha-amylase-related protein (Amyrel).